The primary structure comprises 224 residues: Ras-related protein Rab-11C (224 aa).

17–24 (GDSAVGKS) serves as a coordination point for GTP. An Effector region motif is present at residues 39 to 47 (TKATIGVDF). GTP-binding positions include 65-69 (DTAGQ) and 123-126 (NKSD). Residues 194–224 (QGKKLTPLSDPAPQLTANTTSTHQEKKSGCC) are disordered. S-geranylgeranyl cysteine attachment occurs at residues C223 and C224.

The protein belongs to the small GTPase superfamily. Rab family.

It localises to the membrane. This chain is Ras-related protein Rab-11C (rab11C), found in Dictyostelium discoideum (Social amoeba).